Consider the following 399-residue polypeptide: Serpin-Z4 (399 aa).

The interval 36-56 (GNVAFSPLSLHVALSLITAGA) is signal for targeting protein Z4 into the ER lumen. The RCL stretch occupies residues 343–367 (GTEAGAATVAMGVAMSMPLKVDLVD).

Belongs to the serpin family. In terms of tissue distribution, highly expressed in embryo and endosperm. Is accumulated and stored in the endosperm, where it exists in a free and a bound form. Expressed in roots, coleoptiles, shoots and leaves.

Its function is as follows. A major component of the endosperm albumin, this protein acts as a storage protein during grain filling, contributing a substantial part of the grain's lysine. May have an inhibitory function during filling or germination. Inhibits cathepsin G in vitro. The sequence is that of Serpin-Z4 (PAZ1) from Hordeum vulgare (Barley).